A 147-amino-acid chain; its full sequence is Hemoglobin subunit delta (147 aa).

The Globin domain maps to 3 to 147 (HLTADETALV…VANALAHKYH (145 aa)). S51 is modified (phosphoserine). Heme b is bound by residues H64 and H93.

The protein belongs to the globin family. In terms of assembly, heterotetramer of two delta chains and two alpha chains. As to expression, red blood cells.

The polypeptide is Hemoglobin subunit delta (HBD) (Dugong dugon (Dugong)).